Consider the following 155-residue polypeptide: NADH-ubiquinone oxidoreductase chain 6 (155 aa).

4 helical membrane-spanning segments follow: residues 24–44 (MSLL…LGSF), 51–71 (YILF…VCMI), 88–108 (AWGA…IILG), and 118–138 (IPMT…FAVV).

It belongs to the complex I subunit 6 family.

The protein resides in the mitochondrion membrane. The enzyme catalyses a ubiquinone + NADH + 5 H(+)(in) = a ubiquinol + NAD(+) + 4 H(+)(out). Functionally, core subunit of the mitochondrial membrane respiratory chain NADH dehydrogenase (Complex I) that is believed to belong to the minimal assembly required for catalysis. Complex I functions in the transfer of electrons from NADH to the respiratory chain. The immediate electron acceptor for the enzyme is believed to be ubiquinone. The chain is NADH-ubiquinone oxidoreductase chain 6 (ND6) from Albinaria caerulea (Land snail).